Here is a 336-residue protein sequence, read N- to C-terminus: Acetaldehyde dehydrogenase 1 (336 aa).

Position 32–35 (32–35 (SGVV)) interacts with NAD(+). The active-site Acyl-thioester intermediate is Cys150. Residue Asn309 participates in NAD(+) binding.

This sequence belongs to the acetaldehyde dehydrogenase family.

It carries out the reaction acetaldehyde + NAD(+) + CoA = acetyl-CoA + NADH + H(+). This Mycobacterium ulcerans (strain Agy99) protein is Acetaldehyde dehydrogenase 1 (mhpF).